An 843-amino-acid polypeptide reads, in one-letter code: Protein P (843 aa).

The segment at 1–177 (MPLSYQHFRR…FCGSPYSWEQ (177 aa)) is terminal protein domain (TP). The spacer stretch occupies residues 178-346 (ELQHGSTSLN…YCLSHIINLL (169 aa)). Residues 228 to 316 (KQGQLANGKQ…VPPSTVGSES (89 aa)) are disordered. Polar residues-rich tracts occupy residues 262–276 (TGHSDNLATRSTSRF), 286–299 (NPSLSTSKGHTSTG), and 307–316 (VPPSTVGSES). Residues 347 to 690 (EDWGPCYEHG…YMNLYPVARQ (344 aa)) form a polymerase/reverse transcriptase domain (RT) region. The Reverse transcriptase domain maps to 357-600 (EHHIRTPRTP…YSLHFMGYII (244 aa)). Aspartate 429, aspartate 551, and aspartate 552 together coordinate Mg(2+).

Belongs to the hepadnaviridae P protein family.

It catalyses the reaction DNA(n) + a 2'-deoxyribonucleoside 5'-triphosphate = DNA(n+1) + diphosphate. The enzyme catalyses Endonucleolytic cleavage to 5'-phosphomonoester.. Its activity is regulated as follows. Activated by host HSP70 and HSP40 in vitro to be able to bind the epsilon loop of the pgRNA. Because deletion of the RNase H region renders the protein partly chaperone-independent, the chaperones may be needed indirectly to relieve occlusion of the RNA-binding site by this domain. Inhibited by several reverse-transcriptase inhibitors: Lamivudine, Adefovir and Entecavir. Its function is as follows. Multifunctional enzyme that converts the viral RNA genome into dsDNA in viral cytoplasmic capsids. This enzyme displays a DNA polymerase activity that can copy either DNA or RNA templates, and a ribonuclease H (RNase H) activity that cleaves the RNA strand of RNA-DNA heteroduplexes in a partially processive 3'- to 5'-endonucleasic mode. Neo-synthesized pregenomic RNA (pgRNA) are encapsidated together with the P protein, and reverse-transcribed inside the nucleocapsid. Initiation of reverse-transcription occurs first by binding the epsilon loop on the pgRNA genome, and is initiated by protein priming, thereby the 5'-end of (-)DNA is covalently linked to P protein. Partial (+)DNA is synthesized from the (-)DNA template and generates the relaxed circular DNA (RC-DNA) genome. After budding and infection, the RC-DNA migrates in the nucleus, and is converted into a plasmid-like covalently closed circular DNA (cccDNA). The activity of P protein does not seem to be necessary for cccDNA generation, and is presumably released from (+)DNA by host nuclear DNA repair machinery. This Homo sapiens (Human) protein is Protein P.